Reading from the N-terminus, the 255-residue chain is 5-oxoprolinase subunit A (255 aa).

Belongs to the LamB/PxpA family. In terms of assembly, forms a complex composed of PxpA, PxpB and PxpC.

The catalysed reaction is 5-oxo-L-proline + ATP + 2 H2O = L-glutamate + ADP + phosphate + H(+). Functionally, catalyzes the cleavage of 5-oxoproline to form L-glutamate coupled to the hydrolysis of ATP to ADP and inorganic phosphate. This is 5-oxoprolinase subunit A from Nitrobacter winogradskyi (strain ATCC 25391 / DSM 10237 / CIP 104748 / NCIMB 11846 / Nb-255).